Reading from the N-terminus, the 275-residue chain is Shikimate dehydrogenase (NADP(+)) (275 aa).

Residues 19-21 and Thr66 contribute to the shikimate site; that span reads SKS. Lys70 serves as the catalytic Proton acceptor. Glu82 is an NADP(+) binding site. Shikimate contacts are provided by Asn91 and Asp106. Residues 130–134, 154–159, and Met217 each bind NADP(+); these read GAGGA and NRTASK. Tyr219 provides a ligand contact to shikimate. NADP(+) is bound at residue Gly241.

Belongs to the shikimate dehydrogenase family. Homodimer.

It catalyses the reaction shikimate + NADP(+) = 3-dehydroshikimate + NADPH + H(+). It functions in the pathway metabolic intermediate biosynthesis; chorismate biosynthesis; chorismate from D-erythrose 4-phosphate and phosphoenolpyruvate: step 4/7. In terms of biological role, involved in the biosynthesis of the chorismate, which leads to the biosynthesis of aromatic amino acids. Catalyzes the reversible NADPH linked reduction of 3-dehydroshikimate (DHSA) to yield shikimate (SA). This is Shikimate dehydrogenase (NADP(+)) from Colwellia psychrerythraea (strain 34H / ATCC BAA-681) (Vibrio psychroerythus).